The chain runs to 210 residues: Somatotropin (210 aa).

Residues 1–22 form the signal peptide; it reads MGQVFLLMPVLLVSCFLSQGAA. H38 lines the Zn(2+) pocket. Residues C71 and C183 are joined by a disulfide bond. A Zn(2+)-binding site is contributed by E192. C200 and C208 are joined by a disulfide.

The protein belongs to the somatotropin/prolactin family.

Its subcellular location is the secreted. In terms of biological role, growth hormone plays an important role in growth control and is involved in the regulation of several anabolic processes. Implicated as an osmoregulatory substance important for seawater adaptation. The polypeptide is Somatotropin (gh) (Salmo salar (Atlantic salmon)).